Reading from the N-terminus, the 436-residue chain is GTPase Der (436 aa).

2 EngA-type G domains span residues 4-167 (PVVA…PKEE) and 176-351 (VKFS…DNHS). GTP contacts are provided by residues 10-17 (GRPNVGKS), 57-61 (DTGGI), 119-122 (NKVD), 182-189 (GRPNVGKS), 229-233 (DTAGM), and 294-297 (NKWD). One can recognise a KH-like domain in the interval 352–436 (LRVQSSMLND…PIRVIARKRK (85 aa)).

Belongs to the TRAFAC class TrmE-Era-EngA-EngB-Septin-like GTPase superfamily. EngA (Der) GTPase family. Associates with the 50S ribosomal subunit.

GTPase that plays an essential role in the late steps of ribosome biogenesis. In Listeria monocytogenes serotype 4b (strain F2365), this protein is GTPase Der.